Consider the following 527-residue polypeptide: Peptide chain release factor 3 (527 aa).

A tr-type G domain is found at 9–278 (NKRRTFAIIS…GLTQWAPKPQ (270 aa)). Residues 18-25 (SHPDAGKT), 86-90 (DTPGH), and 140-143 (NKLD) each bind GTP.

Belongs to the TRAFAC class translation factor GTPase superfamily. Classic translation factor GTPase family. PrfC subfamily.

The protein localises to the cytoplasm. Functionally, increases the formation of ribosomal termination complexes and stimulates activities of RF-1 and RF-2. It binds guanine nucleotides and has strong preference for UGA stop codons. It may interact directly with the ribosome. The stimulation of RF-1 and RF-2 is significantly reduced by GTP and GDP, but not by GMP. The protein is Peptide chain release factor 3 of Haemophilus influenzae (strain PittEE).